Consider the following 2513-residue polypeptide: Polyprotein P1234 (2513 aa).

Residues 30–260 form the Alphavirus-like MT domain; sequence VAQQVTPNDH…EHRASLQSWH (231 aa). A nsP1 membrane-binding region spans residues 245–264; the sequence is GSTLYPEHRASLQSWHLPSV. A lipid anchor (S-palmitoyl cysteine; by host) is attached at cysteine 420. The (+)RNA virus helicase ATP-binding domain maps to 695–850; sequence ELTNPPYHEL…KDICTKTFYK (156 aa). Residue 726-733 participates in a ribonucleoside 5'-triphosphate binding; it reads GTPGSGKS. One can recognise a (+)RNA virus helicase C-terminal domain in the interval 851–999; sequence YISRRCTQPV…IEDWEAEHKG (149 aa). The Peptidase C9 domain occupies 1012-1341; that stretch reads NPFSCKTNVC…CVISSVYEGT (330 aa). Positions 1013–1032 are nucleolus localization signal; sequence PFSCKTNVCWAKALEPILAT. Cysteine 1021 serves as the catalytic For cysteine protease nsP2 activity. Positions 1066–1075 match the Nuclear export signal motif; sequence IKFFGMDLTS. Histidine 1098 serves as the catalytic For cysteine protease nsP2 activity. Positions 1196–1200 match the Nuclear localization signal motif; it reads PRKRI. A Macro domain is found at 1348–1507; sequence APSYRTKREN…RIDAALQLKE (160 aa). The ADP-D-ribose site is built by asparagine 1371, glycine 1379, glycine 1459, isoleucine 1460, and tyrosine 1461. Zn(2+) contacts are provided by cysteine 1610, cysteine 1612, cysteine 1635, and cysteine 1653. Over residues 1679–1696 the composition is skewed to low complexity; it reads PTAPPAQAEEAPEVVATP. Positions 1679 to 1705 are disordered; that stretch reads PTAPPAQAEEAPEVVATPSPSTADNTS. 2 short sequence motifs (FGDF; binding to host G3BP1) span residues 1837-1840 and 1860-1863; these read FGSF. Residues 2267 to 2382 enclose the RdRp catalytic domain; that stretch reads DPVLETDIAS…HGVVSDKEMA (116 aa).

As to quaternary structure, interacts with non-structural protein 3. Interacts with RNA-directed RNA polymerase nsP4. Interacts with protease nsP2. interacts with itself. Interacts with host TMEM45B; this interaction leads to viral replication inhibition. In terms of assembly, interacts with mRNA-capping enzyme nsP1. Interacts with host DDX1. Interacts with host DDX3. Interacts (via C-terminus) with host G3BP1; this interaction inhibits the formation of host stress granules on viral mRNAs and the nsp3-G3BP1 complexes bind viral RNAs and probably orchestrate the assembly of viral replication complexes. Interacts (via C-terminus) with host G3BP2; this interaction inhibits the formation of host stress granules on viral mRNAs and the nsp3-G3BP2 complexes bind viral RNAs and probably orchestrate the assembly of viral replication complexes. Interacts with mRNA-capping enzyme nsP1. Interacts with protease nsP2. interacts with itself. Interacts with host TMEM45B; this interaction leads to viral replication inhibition. As to quaternary structure, interacts with RNA-directed RNA polymerase nsP4. Interacts with mRNA-capping enzyme nsP1. Interacts with KPNA1/karyopherin-alpha1; this interaction probably allows the active transport of protease nsP2 into the host nucleus. Mg(2+) is required as a cofactor. It depends on Mn(2+) as a cofactor. Specific enzymatic cleavages in vivo yield mature proteins. The processing of the polyprotein is temporally regulated. In early stages (1.7 hpi), P1234 is first cleaved in trans through its nsP2 protease activity, releasing P123' and nsP4, which associate to form the early replication complex. At the same time, P1234 is also cut at the nsP1/nsP2 site early in infection but with lower efficiency. After replication of the viral minus-strand RNAs (4 hpi), the polyproteins are cut at the nsP1/nsP2 and nsP2/nsP3 sites very efficiently, preventing accumulation of P123' and P1234 and allowing the formation of the late replication complex. NsP3'/nsP4 site is not cleaved anymore and P34 is produced rather than nsP4. In terms of processing, specific enzymatic cleavages in vivo yield mature proteins. The processing of the polyprotein is temporally regulated. In early stages (1.7 hpi), P123 is cleaved at the nsP1/nsP2 site with low efficiency. After replication of the viral minus-strand RNAs (4 hpi), the polyproteins are cut at the nsP1/nsP2 and nsP2/nsP3 sites very efficiently, preventing accumulation of P123 and allowing the formation of the late replication complex. Post-translationally, specific enzymatic cleavages in vivo yield mature proteins. The processing of the polyprotein is temporally regulated. In early stages (1.7 hpi), P123' is cleaved at the nsP1/nsP2 site with low efficiency. After replication of the viral minus-strand RNAs (4 hpi), the polyproteins are cut at the nsP1/nsP2 and nsP2/nsP3 sites very efficiently, preventing accumulation of P123' and allowing the formation of the late replication complex. Palmitoylated by host palmitoyltransferases ZDHHC2 and ZDHHC19. In terms of processing, phosphorylated by host on serines and threonines. Post-translationally, ubiquitinated; targets the protein for rapid degradation via the ubiquitin system. Nsp4 is present in extremely low quantities due to low frequency of translation through the amber stop-codon and the degradation by the ubiquitin pathway.

It is found in the host cytoplasmic vesicle membrane. The protein localises to the host cell membrane. It localises to the host cell projection. The protein resides in the host filopodium. Its subcellular location is the host nucleus. It is found in the host cytoplasm. The catalysed reaction is GTP + S-adenosyl-L-methionine = N(7)-methyl-GTP + S-adenosyl-L-homocysteine. It carries out the reaction N(7)-methyl-GTP + L-histidyl-[protein] = N(tele)-(N(7)-methylguanosine 5'-phospho)-L-histidyl-[protein] + diphosphate. The enzyme catalyses N(tele)-(N(7)-methylguanosine 5'-phospho)-L-histidyl-[protein] + a 5'-end diphospho-(purine-ribonucleoside) in mRNA + H(+) = a 5'-end (N(7)-methyl 5'-triphosphoguanosine)-(purine-ribonucleoside) in mRNA + L-histidyl-[protein]. It catalyses the reaction a 5'-end triphospho-ribonucleoside in mRNA + H2O = a 5'-end diphospho-ribonucleoside in mRNA + phosphate + H(+). The catalysed reaction is a ribonucleoside 5'-triphosphate + H2O = a ribonucleoside 5'-diphosphate + phosphate + H(+). It carries out the reaction ATP + H2O = ADP + phosphate + H(+). The enzyme catalyses RNA(n) + a ribonucleoside 5'-triphosphate = RNA(n+1) + diphosphate. It catalyses the reaction RNA(n) + ATP = RNA(n)-3'-adenine ribonucleotide + diphosphate. The catalysed reaction is 4-O-(ADP-D-ribosyl)-L-aspartyl-[protein] + H2O = L-aspartyl-[protein] + ADP-D-ribose + H(+). It carries out the reaction 5-O-(ADP-D-ribosyl)-L-glutamyl-[protein] + H2O = L-glutamyl-[protein] + ADP-D-ribose + H(+). The enzyme catalyses ADP-alpha-D-ribose 1''-phosphate + H2O = ADP-D-ribose + phosphate. Functionally, inactive precursor of the viral replicase, which is activated by cleavages carried out by the viral protease nsP2. Its function is as follows. The early replication complex formed by the polyprotein P123 and nsP4 synthesizes minus-strand RNAs. Polyprotein P123 is a short-lived polyprotein that accumulates during early stage of infection. As soon P123 is cleaved into mature proteins, the plus-strand RNAs synthesis begins. The early replication complex formed by the polyprotein P123' and nsP4 synthesizes minus-strand RNAs. Polyprotein P123' is a short-lived polyprotein that accumulates during early stage of infection. As soon P123' is cleaved into mature proteins, the plus-strand RNAs synthesis begins. In terms of biological role, cytoplasmic capping enzyme that catalyzes two virus-specific reactions: methyltransferase and nsP1 guanylyltransferase. mRNA-capping is necessary since all viral RNAs are synthesized in the cytoplasm, and host capping enzymes are restricted to the nucleus. The enzymatic reaction involves a covalent link between 7-methyl-GMP and nsP1, whereas eukaryotic capping enzymes form a covalent complex only with GMP. nsP1 capping consists in the following reactions: GTP is first methylated into 7-methyl-GMP and then is covalently linked to nsP1 to form the m7GMp-nsP1 complex from which 7-methyl-GMP complex is transferred to the mRNA to create the cap structure. NsP1 is needed for the initiation of the minus-strand RNAs synthesis. Probably serves as a membrane anchor for the replication complex composed of nsP1-nsP4. Palmitoylated nsP1 is remodeling host cell cytoskeleton, and induces filopodium-like structure formation at the surface of the host cell. Functionally, multifunctional protein whose N-terminus is part of the RNA polymerase complex and displays NTPase, RNA triphosphatase and helicase activities. NTPase and RNA triphosphatase are involved in viral RNA capping and helicase keeps a check on the dsRNA replication intermediates. The C-terminus harbors a protease that specifically cleaves the polyproteins and releases the mature proteins. Required for the shutoff of minus-strand RNAs synthesis. Specifically inhibits the host IFN response by promoting the nuclear export of host STAT1. Also inhibits host transcription by inducing rapid proteasome-dependent degradation of POLR2A, a catalytic subunit of the RNAPII complex. The resulting inhibition of cellular protein synthesis serves to ensure maximal viral gene expression and to evade host immune response. Its function is as follows. Seems to be essential for minus-strand RNAs and subgenomic 26S mRNAs synthesis. Displays mono-ADP-ribosylhydrolase activity. ADP-ribosylation is a post-translantional modification that controls various processes of the host cell and the virus probably needs to revert it for optimal viral replication. Binds proteins of G3BP family and sequesters them into the viral RNA replication complexes thereby inhibiting the formation of host stress granules on viral mRNAs. The nsp3-G3BP complexes bind viral RNAs and probably orchestrate the assembly of viral replication complexes, thanks to the ability of G3BP family members to self-assemble and bind DNA. Seems to be essential for minus-strand RNAs and subgenomic 26S mRNAs synthesis. Displays mono-ADP-ribosylhydrolase activity. ADP-ribosylation is a post-translational modification that controls various processes of the host cell and the virus probably needs to revert it for optimal viral replication. Binds proteins of G3BP family and sequesters them into the viral RNA replication complexes thereby inhibiting the formation of host stress granules on viral mRNAs. The nsp3'-G3BP complexes bind viral RNAs and probably orchestrate the assembly of viral replication complexes, thanks to the ability of G3BP family members to self-assemble and bind DNA. In terms of biological role, RNA dependent RNA polymerase. Replicates genomic and antigenomic RNA by recognizing replications specific signals. The early replication complex formed by the polyprotein P123 and nsP4 synthesizes minus-strand RNAs. The late replication complex composed of fully processed nsP1-nsP4 is responsible for the production of genomic and subgenomic plus-strand RNAs. The core catalytic domain of nsP4 also possesses terminal adenylyltransferase (TATase) activity that is probably involved in maintenance and repair of the poly(A) tail, an element required for replication of the viral genome. This chain is Polyprotein P1234, found in Acrocephalus scirpaceus (Eurasian reed-warbler).